Consider the following 232-residue polypeptide: 2,3-bisphosphoglycerate-dependent phosphoglycerate mutase 1 (232 aa).

Residues 8–15 (RHGQSLWN), 21–22 (TG), R58, 114–117 (ERYY), K125, 141–142 (RR), and 185–186 (GN) contribute to the substrate site. H9 (tele-phosphohistidine intermediate) is an active-site residue. Catalysis depends on E114, which acts as the Proton donor/acceptor.

Belongs to the phosphoglycerate mutase family. BPG-dependent PGAM subfamily.

It carries out the reaction (2R)-2-phosphoglycerate = (2R)-3-phosphoglycerate. It functions in the pathway carbohydrate degradation; glycolysis; pyruvate from D-glyceraldehyde 3-phosphate: step 3/5. Catalyzes the interconversion of 2-phosphoglycerate and 3-phosphoglycerate. The chain is 2,3-bisphosphoglycerate-dependent phosphoglycerate mutase 1 from Gloeobacter violaceus (strain ATCC 29082 / PCC 7421).